The sequence spans 502 residues: Maturase K (502 aa).

The protein belongs to the intron maturase 2 family. MatK subfamily.

Its subcellular location is the plastid. It localises to the chloroplast. In terms of biological role, usually encoded in the trnK tRNA gene intron. Probably assists in splicing its own and other chloroplast group II introns. The protein is Maturase K of Fremontodendron californicum (California flannelbush).